The following is a 161-amino-acid chain: MPSFDIVSKVEMQEVDNAVNQAIKEIGQRYDFKGSKSEITQEKDAIKVLADDDYKLKAVIDVLQSKLHKRNISIKSLQYGKVEPASGGMVRQIISVQQGISKEKGKEIIAVIKESKLKVQAQIQDDQVRVTGKNRDDLQDTIQLLKGKDLDIEMQFTNFRE.

It belongs to the YajQ family.

Nucleotide-binding protein. The protein is Nucleotide-binding protein Glov_3198 of Trichlorobacter lovleyi (strain ATCC BAA-1151 / DSM 17278 / SZ) (Geobacter lovleyi).